The chain runs to 99 residues: MALTKAEMSEYLFDKLGLSKRDAKELVELFFEEIRRALENGEQVKLSGFGNFDLRDKNQRPGRNPKTGEDIPITARRVVTFRPGQKLKSRVENASPKEN.

A disordered region spans residues 49–70 (FGNFDLRDKNQRPGRNPKTGED).

The protein belongs to the bacterial histone-like protein family. As to quaternary structure, heterodimer of an alpha and a beta chain.

In terms of biological role, this protein is one of the two subunits of integration host factor, a specific DNA-binding protein that functions in genetic recombination as well as in transcriptional and translational control. In Cronobacter sakazakii (strain ATCC BAA-894) (Enterobacter sakazakii), this protein is Integration host factor subunit alpha.